A 419-amino-acid polypeptide reads, in one-letter code: E3 ubiquitin-protein ligase RNF130 (419 aa).

The first 27 residues, 1 to 27 (MSGAARAGPARLAALALLTCSLWPTRA), serve as a signal peptide directing secretion. Topologically, residues 28–194 (DNASQEYYTA…MPPKNFSRGS (167 aa)) are extracellular. N-linked (GlcNAc...) asparagine glycosylation is found at asparagine 29, asparagine 40, asparagine 112, asparagine 135, asparagine 172, and asparagine 189. The PA domain occupies 105-176 (IALLQRGNCT…SYLEKNISVQ (72 aa)). Residues 195-217 (LVFVSISFIVLMIISSAWLIFYF) traverse the membrane as a helical segment. Over 218 to 419 (IQKIRYTNAR…SLNANEVEWF (202 aa)) the chain is Cytoplasmic. The segment at 264–305 (CAVCIESYKQNDVVRVLPCKHVFHKSCVDPWLSEHCTCPMCK) adopts an RING-type zinc-finger fold.

As to expression, expression is highest in liver, with lesser amounts in the lung, spleen, brain, heart, kidney and testis.

It is found in the membrane. The protein localises to the cytoplasm. It catalyses the reaction S-ubiquitinyl-[E2 ubiquitin-conjugating enzyme]-L-cysteine + [acceptor protein]-L-lysine = [E2 ubiquitin-conjugating enzyme]-L-cysteine + N(6)-ubiquitinyl-[acceptor protein]-L-lysine.. It functions in the pathway protein modification; protein ubiquitination. Functionally, acts as an E3 ubiquitin-protein ligase. May have a role during the programmed cell death of hematopoietic cells. This chain is E3 ubiquitin-protein ligase RNF130, found in Mus musculus (Mouse).